A 489-amino-acid chain; its full sequence is 2-(3-amino-3-carboxypropyl)histidine synthase subunit 2 (489 aa).

Met-1 carries the N-acetylmethionine modification. A Phosphoserine modification is found at Ser-7. Residues Cys-89, Cys-110, and Cys-341 each contribute to the [4Fe-4S] cluster site. Ser-446 carries the post-translational modification Phosphoserine. At Thr-467 the chain carries Phosphothreonine. Ser-488 carries the phosphoserine modification.

This sequence belongs to the DPH1/DPH2 family. DPH2 subfamily. In terms of assembly, component of the 2-(3-amino-3-carboxypropyl)histidine synthase complex composed of DPH1, DPH2, DPH3 and a NADH-dependent reductase. Interacts with DPH1. The cofactor is [4Fe-4S] cluster.

The protein operates within protein modification; peptidyl-diphthamide biosynthesis. In terms of biological role, required for the first step of diphthamide biosynthesis, a post-translational modification of histidine which occurs in elongation factor 2. DPH1 and DPH2 transfer a 3-amino-3-carboxypropyl (ACP) group from S-adenosyl-L-methionine (SAM) to a histidine residue, the reaction is assisted by a reduction system comprising DPH3 and a NADH-dependent reductase. Facilitates the reduction of the catalytic iron-sulfur cluster found in the DPH1 subunit. The polypeptide is 2-(3-amino-3-carboxypropyl)histidine synthase subunit 2 (Dph2) (Mus musculus (Mouse)).